The following is a 597-amino-acid chain: Alkyldihydroxyacetonephosphate synthase (597 aa).

Residues 131-313 (IPRLPDIVVW…SEVTIKIFPI (183 aa)) form the FAD-binding PCMH-type domain. FAD-binding positions include 163–169 (PIGGGTS), 232–238 (DSIEFST), 245–248 (TRAS), and 297–303 (EGTLGVV). Arg-444 provides a ligand contact to substrate. Tyr-507 (proton donor/acceptor) is an active-site residue. The tract at residues 544–546 (HHH) is important for enzyme activity. A Microbody targeting signal motif is present at residues 595–597 (CKL).

It belongs to the FAD-binding oxidoreductase/transferase type 4 family. As to quaternary structure, homodimer. The cofactor is FAD.

The protein resides in the peroxisome. The catalysed reaction is a long chain fatty alcohol + a 1-acylglycerone 3-phosphate = a 1-O-alkylglycerone 3-phosphate + a long-chain fatty acid + H(+). The protein operates within glycerolipid metabolism; ether lipid biosynthesis. Its function is as follows. Catalyzes the exchange of an acyl for a long-chain alkyl group and the formation of the ether bond in the biosynthesis of ether phospholipids. This is Alkyldihydroxyacetonephosphate synthase (ads-1) from Caenorhabditis elegans.